The primary structure comprises 427 residues: Lactadherin (427 aa).

Residues 1 to 18 (MPCPRLLAALFCSSGLFA) form the signal peptide. EGF-like domains are found at residues 20–59 (SGDF…LLCN) and 62–106 (EHGP…IHCE). Intrachain disulfides connect C24/C35, C29/C47, and C49/C58. A glycan (O-linked (Fuc...) serine; in PAS-6) is linked at S27. An O-linked (Fuc...) threonine; in PAS-7 glycan is attached at T34. A glycan (N-linked (GlcNAc...) (hybrid) asparagine; in PAS-6 and PAS-7) is linked at N59. Intrachain disulfides connect C66/C77, C71/C94, C96/C105, C109/C265, C252/C256, and C270/C427. Residues 85–87 (RGD) carry the Cell attachment site motif. 2 consecutive F5/8 type C domains span residues 109–265 (CTSP…LLGC) and 270–427 (CTEP…LLGC). A glycan (N-linked (GlcNAc...) (high mannose) asparagine; in PAS-6) is linked at N227.

In terms of processing, the two O-linked glycans consist of Gal, GlcNAc and Fuc, with probably Fuc as reducing terminal sugar. Milk and spermatozoan. Also present in epididymis, kidney, heart, lymphatic gland and spleen but not esophagus, small intestine, muscle and liver.

It localises to the membrane. Its subcellular location is the secreted. The protein resides in the cytoplasmic vesicle. It is found in the secretory vesicle. The protein localises to the acrosome membrane. In terms of biological role, contributes to phagocytic removal of apoptotic cells in many tissues. Plays an important role in the maintenance of intestinal epithelial homeostasis and the promotion of mucosal healing. Promotes VEGF-dependent neovascularization. Specific ligand for the alpha-v/beta-3 and alpha-v/beta-5 receptors. Also binds to phosphatidylserine-enriched cell surfaces in a receptor-independent manner. Zona pellucida-binding protein which may play a role in gamete interaction. The sequence is that of Lactadherin (MFGE8) from Bos taurus (Bovine).